The chain runs to 181 residues: Histone deacetylase complex subunit SAP30L (181 aa).

An Atypical zinc finger spans residues 26–74; the sequence is CCLIDGGERCPRPAGNASFSKRVQKSISQKKLKLDIDKSVRHLYICDFH. Residues 82 to 103 form a disordered region; the sequence is RNKRKRKTSDDGGDSPEHETDV. A Nuclear localization signal (NLS) motif is present at residues 83 to 88; sequence NKRKRK. The tract at residues 85–87 is important for DNA and phosphoinositide binding; it reads RKR.

Belongs to the SAP30 family. As to quaternary structure, interacts with components of the histone deacetylase complex sin3a, hdac1 and hdac2. Binds histones and nucleosomes.

The protein localises to the nucleus. It localises to the nucleolus. Functionally, functions as a transcription repressor, probably via its interaction with histone deacetylase complexes. Involved in the functional recruitment of the class 1 Sin3-histone deacetylase complex (HDAC) to the nucleolus. Binds DNA, apparently without sequence-specificity, and bends bound double-stranded DNA. Binds phosphoinositol phosphates (phosphoinositol 3-phosphate, phosphoinositol 4-phosphate and phosphoinositol 5-phosphate) via the same basic sequence motif that mediates DNA binding and nuclear import. The sequence is that of Histone deacetylase complex subunit SAP30L (sap30l) from Xenopus tropicalis (Western clawed frog).